Here is a 1942-residue protein sequence, read N- to C-terminus: GREB1-like protein (1942 aa).

Disordered regions lie at residues 76–101 (SSNSVEDMDDEDDSDTSSPPLPYLQG), 235–306 (PFSN…GTKT), 325–373 (MDGR…HRSW), and 1123–1256 (TKTA…RTQV). Acidic residues predominate over residues 81–90 (EDMDDEDDSD). The span at 237–253 (SNSASSSKPSSSSSLSS) shows a compositional bias: low complexity. A compositionally biased stretch (polar residues) spans 338 to 362 (NPLSTPSHGYRTTETGDSPASTAMS). The segment covering 1127–1155 (TSREERPREGERSSGETAEHDDLPMELER) has biased composition (basic and acidic residues). Over residues 1158–1171 (SNASAATRTSGSTT) the composition is skewed to low complexity. Residues 1172–1202 (ENGVSSSSILDKPSSQSDPCGSRTMMDSCSS) are compositionally biased toward polar residues. Positions 1212 to 1248 (SQAPSSSSTSSFSSASSSSSSSSSPAAQRPSQSTQAP) are enriched in low complexity. The helical transmembrane segment at 1861–1881 (GVIFSGLLLYLCDSFVVSSLL) threads the bilayer.

Belongs to the GREB1 family.

The protein resides in the membrane. Functionally, plays a major role in early metanephros development. The polypeptide is GREB1-like protein (greb1l) (Danio rerio (Zebrafish)).